Reading from the N-terminus, the 187-residue chain is Pyridoxal 5'-phosphate synthase subunit PdxT (187 aa).

47–49 (GES) provides a ligand contact to L-glutamine. Catalysis depends on cysteine 76, which acts as the Nucleophile. Residues arginine 102 and 128 to 129 (IR) each bind L-glutamine. Residues histidine 165 and glutamate 167 each act as charge relay system in the active site.

It belongs to the glutaminase PdxT/SNO family. In terms of assembly, in the presence of PdxS, forms a dodecamer of heterodimers. Only shows activity in the heterodimer.

The enzyme catalyses aldehydo-D-ribose 5-phosphate + D-glyceraldehyde 3-phosphate + L-glutamine = pyridoxal 5'-phosphate + L-glutamate + phosphate + 3 H2O + H(+). It carries out the reaction L-glutamine + H2O = L-glutamate + NH4(+). The protein operates within cofactor biosynthesis; pyridoxal 5'-phosphate biosynthesis. Functionally, catalyzes the hydrolysis of glutamine to glutamate and ammonia as part of the biosynthesis of pyridoxal 5'-phosphate. The resulting ammonia molecule is channeled to the active site of PdxS. The sequence is that of Pyridoxal 5'-phosphate synthase subunit PdxT from Methanococcus vannielii (strain ATCC 35089 / DSM 1224 / JCM 13029 / OCM 148 / SB).